The chain runs to 101 residues: Olivetolic acid cyclase (101 aa).

The 95-residue stretch at 3–97 (VKHLIVLKFK…FWEKLLIFDY (95 aa)) folds into the Stress-response A/B barrel domain. Position 5 (His-5) interacts with 3,5,7-trioxododecanoyl-CoA. Mg(2+)-binding residues include Val-31, Ile-34, and Met-37. Tyr-72 provides a ligand contact to 3,5,7-trioxododecanoyl-CoA. Residues Tyr-72 and His-75 each act as acid/base catalyst in the active site.

As to quaternary structure, homodimer. As to expression, expressed in glandular trichomes and at lower levels in female flowers.

The protein resides in the cytoplasm. The catalysed reaction is 3,5,7-trioxododecanoyl-CoA = olivetolate + CoA + H(+). It functions in the pathway secondary metabolite biosynthesis; terpenoid biosynthesis. Involved in the biosynthesis of cannabinoids-related terpenophenolic natural products, which have pharmacological activity. Polyketide cyclase which functions in concert with OLS/TKS to form olivetolic acid. Has no intrinsic polyketide synthase activity and requires the presence of OLS to produce olivetolic acid. This Cannabis sativa (Hemp) protein is Olivetolic acid cyclase.